Reading from the N-terminus, the 433-residue chain is Trigger factor (433 aa).

One can recognise a PPIase FKBP-type domain in the interval 166 to 251 (GDFAVIDFEG…LHEIQERAKP (86 aa)).

It belongs to the FKBP-type PPIase family. Tig subfamily.

The protein resides in the cytoplasm. The enzyme catalyses [protein]-peptidylproline (omega=180) = [protein]-peptidylproline (omega=0). In terms of biological role, involved in protein export. Acts as a chaperone by maintaining the newly synthesized protein in an open conformation. Functions as a peptidyl-prolyl cis-trans isomerase. This is Trigger factor from Aliarcobacter butzleri (strain RM4018) (Arcobacter butzleri).